The primary structure comprises 228 residues: Triosephosphate isomerase (228 aa).

11-13 contributes to the substrate binding site; that stretch reads NFK. H95 acts as the Electrophile in catalysis. Residue E143 is the Proton acceptor of the active site. Residues I148, G183, and 204–205 contribute to the substrate site; that span reads AS.

This sequence belongs to the triosephosphate isomerase family. In terms of assembly, homotetramer; dimer of dimers.

Its subcellular location is the cytoplasm. It catalyses the reaction D-glyceraldehyde 3-phosphate = dihydroxyacetone phosphate. The protein operates within carbohydrate biosynthesis; gluconeogenesis. It functions in the pathway carbohydrate degradation; glycolysis; D-glyceraldehyde 3-phosphate from glycerone phosphate: step 1/1. Functionally, involved in the gluconeogenesis. Catalyzes stereospecifically the conversion of dihydroxyacetone phosphate (DHAP) to D-glyceraldehyde-3-phosphate (G3P). The polypeptide is Triosephosphate isomerase (Pyrococcus abyssi (strain GE5 / Orsay)).